Reading from the N-terminus, the 560-residue chain is Chaperonin GroEL 2 (560 aa).

ATP-binding positions include 29–32, 86–90, G413, and D492; these read TIGP and DGTTT. A disordered region spans residues 520 to 542; sequence DKPEPPSAPGAEGGDPMGGMGGM. The span at 530–542 shows a compositional bias: gly residues; that stretch reads AEGGDPMGGMGGM.

This sequence belongs to the chaperonin (HSP60) family. In terms of assembly, forms a cylinder of 14 subunits composed of two heptameric rings stacked back-to-back. Interacts with the co-chaperonin GroES.

The protein localises to the cytoplasm. It carries out the reaction ATP + H2O + a folded polypeptide = ADP + phosphate + an unfolded polypeptide.. Together with its co-chaperonin GroES, plays an essential role in assisting protein folding. The GroEL-GroES system forms a nano-cage that allows encapsulation of the non-native substrate proteins and provides a physical environment optimized to promote and accelerate protein folding. This is Chaperonin GroEL 2 from Prochlorococcus marinus (strain NATL2A).